A 291-amino-acid polypeptide reads, in one-letter code: MPAKIIDGKTIAQTIRSEVAVRVQQRVAAGRRAPGLAVVLVGENPASQIYVASKRRACEEVGFVSRSYDLPDTTSEAELLNLIDQLNNDSDIDGILVQLPLPAGIDNVKVLERIQPDKDVDGFHPYNIGRLCQRAPKLRPCTPRGIATLLERCGINTYGLNAVIIGASNIVGRPMSLELLLAGCTTTVTHRFTKDLRHHVEQADLLIVAVGKPNFIPGEWIKPGAIVIDVGINRLEDGKVIGDVDFETASERASWISPVPGGVGPMTVATLIQNTLQACEEYHDVERIEGC.

Residues G166–S168 and I232 contribute to the NADP(+) site.

The protein belongs to the tetrahydrofolate dehydrogenase/cyclohydrolase family. In terms of assembly, homodimer.

The enzyme catalyses (6R)-5,10-methylene-5,6,7,8-tetrahydrofolate + NADP(+) = (6R)-5,10-methenyltetrahydrofolate + NADPH. The catalysed reaction is (6R)-5,10-methenyltetrahydrofolate + H2O = (6R)-10-formyltetrahydrofolate + H(+). It functions in the pathway one-carbon metabolism; tetrahydrofolate interconversion. Catalyzes the oxidation of 5,10-methylenetetrahydrofolate to 5,10-methenyltetrahydrofolate and then the hydrolysis of 5,10-methenyltetrahydrofolate to 10-formyltetrahydrofolate. The protein is Bifunctional protein FolD of Photorhabdus laumondii subsp. laumondii (strain DSM 15139 / CIP 105565 / TT01) (Photorhabdus luminescens subsp. laumondii).